The sequence spans 629 residues: tRNA uridine 5-carboxymethylaminomethyl modification enzyme MnmG (629 aa).

FAD is bound by residues 13 to 18 (GGGHAG), V125, and S180. 273 to 287 (GPRYCPSIEDKVMRF) contacts NAD(+). Q370 contacts FAD.

Belongs to the MnmG family. Homodimer. Heterotetramer of two MnmE and two MnmG subunits. The cofactor is FAD.

It localises to the cytoplasm. Its function is as follows. NAD-binding protein involved in the addition of a carboxymethylaminomethyl (cmnm) group at the wobble position (U34) of certain tRNAs, forming tRNA-cmnm(5)s(2)U34. The polypeptide is tRNA uridine 5-carboxymethylaminomethyl modification enzyme MnmG (Shigella sonnei (strain Ss046)).